The chain runs to 378 residues: Uroporphyrinogen decarboxylase (378 aa).

Substrate is bound by residues 40 to 44 (RQAGR), Asp-90, Tyr-167, Ser-222, and His-355.

Belongs to the uroporphyrinogen decarboxylase family. Homodimer.

It is found in the cytoplasm. The enzyme catalyses uroporphyrinogen III + 4 H(+) = coproporphyrinogen III + 4 CO2. It participates in porphyrin-containing compound metabolism; protoporphyrin-IX biosynthesis; coproporphyrinogen-III from 5-aminolevulinate: step 4/4. In terms of biological role, catalyzes the decarboxylation of four acetate groups of uroporphyrinogen-III to yield coproporphyrinogen-III. This Psychrobacter cryohalolentis (strain ATCC BAA-1226 / DSM 17306 / VKM B-2378 / K5) protein is Uroporphyrinogen decarboxylase.